The chain runs to 239 residues: Lactate utilization protein A (239 aa).

This sequence belongs to the LutA/YkgE family.

Functionally, is involved in L-lactate degradation and allows cells to grow with lactate as the sole carbon source. This Bacillus cytotoxicus (strain DSM 22905 / CIP 110041 / 391-98 / NVH 391-98) protein is Lactate utilization protein A.